A 105-amino-acid polypeptide reads, in one-letter code: Met repressor (105 aa).

The protein belongs to the MetJ family. Homodimer.

It is found in the cytoplasm. Functionally, this regulatory protein, when combined with SAM (S-adenosylmethionine) represses the expression of the methionine regulon and of enzymes involved in SAM synthesis. The polypeptide is Met repressor (Erwinia tasmaniensis (strain DSM 17950 / CFBP 7177 / CIP 109463 / NCPPB 4357 / Et1/99)).